The chain runs to 107 residues: Transmembrane protein 213 (107 aa).

The first 27 residues, 1-27 (MQRLPAATRATLILSLAFASLHSACSA), serve as a signal peptide directing secretion. The Extracellular segment spans residues 28-70 (EASSSNSSSLTAHHPDPGTLEQCLNVDFCPQAARCCRTGVDEY). A helical transmembrane segment spans residues 71–91 (GWIAAAVGWSLWFLTLILLCV). Residues 92–107 (DKLMKLTPDEPKDLQA) are Cytoplasmic-facing.

It is found in the membrane. In Homo sapiens (Human), this protein is Transmembrane protein 213 (TMEM213).